The primary structure comprises 363 residues: Chorismate synthase (363 aa).

An NADP(+)-binding site is contributed by Arg48. Residues 125–127 (RSS), 238–239 (NA), Gly278, 293–297 (KPTAS), and Arg319 each bind FMN.

The protein belongs to the chorismate synthase family. As to quaternary structure, homotetramer. FMNH2 serves as cofactor.

The enzyme catalyses 5-O-(1-carboxyvinyl)-3-phosphoshikimate = chorismate + phosphate. Its pathway is metabolic intermediate biosynthesis; chorismate biosynthesis; chorismate from D-erythrose 4-phosphate and phosphoenolpyruvate: step 7/7. Its function is as follows. Catalyzes the anti-1,4-elimination of the C-3 phosphate and the C-6 proR hydrogen from 5-enolpyruvylshikimate-3-phosphate (EPSP) to yield chorismate, which is the branch point compound that serves as the starting substrate for the three terminal pathways of aromatic amino acid biosynthesis. This reaction introduces a second double bond into the aromatic ring system. The protein is Chorismate synthase of Acinetobacter baylyi (strain ATCC 33305 / BD413 / ADP1).